Here is a 351-residue protein sequence, read N- to C-terminus: Auxin efflux carrier component 5 (351 aa).

The next 10 membrane-spanning stretches (helical) occupy residues 7–27 (VYKV…GYGS), 39–59 (CDAI…IEFT), 71–91 (FIAA…LWAK), 100–120 (WSIT…GVPL), 132–152 (LVVQ…LFVL), 210–230 (ILGI…PGIL), 234–254 (ILIM…IFMA), 271–291 (MVLK…VLGL), 295–315 (VLRV…FIFA), and 329–349 (VIFG…ALEF).

Belongs to the auxin efflux carrier (TC 2.A.69.1) family. Expressed in elongating parts of hypocotyl, cotyledon vasculature and guard cells. Detected in root pericycle and root tip and at later developmental stages in leaves, stems and flowers. Expressed in veins of mature leaves.

It is found in the endoplasmic reticulum membrane. It localises to the cell membrane. Auxin transporter regulating intracellular auxin homeostasis and metabolism. Mediates the auxin transport from the cytosol into the lumen of the endoplasmic reticulum. May also act as an auxin efflux carrier when located to the cell membrane. PIN5 and PIN8 may have an antagonistic/compensatory activity. Involved in unfolded protein response (UPR) activation. Involved in the control of vein patterning. Promotes vein formation. PIN5, PIN6, and PIN8 control vein network geometry, but they are expressed in mutually exclusive domains of leaf vascular cells. This chain is Auxin efflux carrier component 5, found in Arabidopsis thaliana (Mouse-ear cress).